Consider the following 287-residue polypeptide: Elongation factor Ts (287 aa).

The tract at residues T79–V82 is involved in Mg(2+) ion dislocation from EF-Tu.

Belongs to the EF-Ts family.

The protein resides in the cytoplasm. Associates with the EF-Tu.GDP complex and induces the exchange of GDP to GTP. It remains bound to the aminoacyl-tRNA.EF-Tu.GTP complex up to the GTP hydrolysis stage on the ribosome. This is Elongation factor Ts from Anaplasma phagocytophilum (strain HZ).